The primary structure comprises 417 residues: Serine hydroxymethyltransferase (417 aa).

Residues Leu-121 and 125–127 contribute to the (6S)-5,6,7,8-tetrahydrofolate site; that span reads GHL. Lys-229 carries the post-translational modification N6-(pyridoxal phosphate)lysine. Residue 355-357 participates in (6S)-5,6,7,8-tetrahydrofolate binding; sequence SPF.

Belongs to the SHMT family. As to quaternary structure, homodimer. It depends on pyridoxal 5'-phosphate as a cofactor.

The protein localises to the cytoplasm. It carries out the reaction (6R)-5,10-methylene-5,6,7,8-tetrahydrofolate + glycine + H2O = (6S)-5,6,7,8-tetrahydrofolate + L-serine. Its pathway is one-carbon metabolism; tetrahydrofolate interconversion. The protein operates within amino-acid biosynthesis; glycine biosynthesis; glycine from L-serine: step 1/1. In terms of biological role, catalyzes the reversible interconversion of serine and glycine with tetrahydrofolate (THF) serving as the one-carbon carrier. This reaction serves as the major source of one-carbon groups required for the biosynthesis of purines, thymidylate, methionine, and other important biomolecules. Also exhibits THF-independent aldolase activity toward beta-hydroxyamino acids, producing glycine and aldehydes, via a retro-aldol mechanism. This is Serine hydroxymethyltransferase from Stenotrophomonas maltophilia (strain K279a).